The primary structure comprises 58 residues: ATP synthase subunit a (58 aa).

Helical transmembrane passes span 11–31 (EIFYFIGALGPLFIVLALTGL) and 35–55 (VAILQAYVFTILICIYLNDAI).

Belongs to the ATPase A chain family. F-type ATPases have 2 components, CF(1) - the catalytic core - and CF(0) - the membrane proton channel. CF(1) has five subunits: alpha(3), beta(3), gamma(1), delta(1), epsilon(1). CF(0) has three main subunits: a, b and c.

Its subcellular location is the mitochondrion inner membrane. Mitochondrial membrane ATP synthase (F(1)F(0) ATP synthase or Complex V) produces ATP from ADP in the presence of a proton gradient across the membrane which is generated by electron transport complexes of the respiratory chain. F-type ATPases consist of two structural domains, F(1) - containing the extramembraneous catalytic core and F(0) - containing the membrane proton channel, linked together by a central stalk and a peripheral stalk. During catalysis, ATP synthesis in the catalytic domain of F(1) is coupled via a rotary mechanism of the central stalk subunits to proton translocation. Key component of the proton channel; it may play a direct role in the translocation of protons across the membrane. The chain is ATP synthase subunit a (ATP6) from Brassica tournefortii (Wild turnip).